The chain runs to 145 residues: Glycine-rich protein (145 aa).

Positions 1–19 (MKLTLAVVVVFAYIATTNA) are cleaved as a signal peptide.

In terms of tissue distribution, component of the acid-insoluble and acid-soluble organic matrix of calcified layers of the shell (at protein level).

The protein resides in the secreted. The sequence is that of Glycine-rich protein from Lottia gigantea (Giant owl limpet).